Consider the following 242-residue polypeptide: Pyr4-family terpene cyclase mfmH (242 aa).

A run of 4 helical transmembrane segments spans residues 25–45, 55–75, 80–100, and 116–136; these read VQDGLIICSGLCWTTAYILYI, GMPLVCLCANIAWEFLFGAAI, AQVVSFFPWFVIDIGIVYTTW, and NLGWILLGGIAGMLVMFWAFL. An N-linked (GlcNAc...) asparagine glycan is attached at Asn170. Helical transmembrane passes span 175 to 195 and 211 to 231; these read SWGIWFTRWIGSVFAELIFVW and VTIFLFIVTEVADLTYPFVYA.

It belongs to the paxB family.

It localises to the membrane. It participates in secondary metabolite biosynthesis; terpenoid biosynthesis. Terpene cyclase; part of the gene cluster that mediates the biosynthesis of the phthalide-terpenoid hybrid 11'-O-desmethylfendlerol. Within the pathway, mfmH catalyzes the last step and cyclizes the prenyl unit of 5-O-farnesylcyclopolic acid into a drimane-like structure to yield 11'-O-desmethylfendlerol. The biosynthesis of 11'-O-desmethylfendlerol begins with the NR-PKS mfmB that forms 3,5-dimethylorsellinic acid (DMOA), which is then transformed into the phthalide 5,7-dihydroxy-4-(hydroxymethyl)-6-methylphthalide by the cytochrome P450 monooxygenase mfmA and the hydrolase mfmC. Subsequently, the methyltransferase mfmE catalyzes 7-O-methylation to yield 5-hydroxy-4-(hydroxymethyl)-7-methoxy-6-methylphthalide, which undergoes C-3 hydroxylation by the cytochrome P450 monooxygenase mfmF. The resultant cyclopolic acid (2,5-dihydroxy-4-(hydroxymethyl)-7-methoxy-6-methylphthalide) is then farnesylated by the DMATS-type prenyltransferase mfmD to afford 5-O-farnesylcyclopolic acid. Finally, the Pyr4-family terpene cyclase mfmH cyclizes the farnesyl moiety of 5-O-farnesylcyclopolic acid into a drimane-like structure, thus completing the biosynthesis of 11'-O-desmethylfendlerol. This is Pyr4-family terpene cyclase mfmH from Annulohypoxylon moriforme (Filamentous fungus).